A 178-amino-acid polypeptide reads, in one-letter code: Large ribosomal subunit protein uL5 (178 aa).

It belongs to the universal ribosomal protein uL5 family. In terms of assembly, part of the 50S ribosomal subunit; part of the 5S rRNA/L5/L18/L25 subcomplex. Contacts the 5S rRNA and the P site tRNA. Forms a bridge to the 30S subunit in the 70S ribosome.

In terms of biological role, this is one of the proteins that bind and probably mediate the attachment of the 5S RNA into the large ribosomal subunit, where it forms part of the central protuberance. In the 70S ribosome it contacts protein S13 of the 30S subunit (bridge B1b), connecting the 2 subunits; this bridge is implicated in subunit movement. Contacts the P site tRNA; the 5S rRNA and some of its associated proteins might help stabilize positioning of ribosome-bound tRNAs. In Prochlorococcus marinus (strain MIT 9515), this protein is Large ribosomal subunit protein uL5.